Reading from the N-terminus, the 86-residue chain is RNA-binding protein Hfq (86 aa).

The 60-residue stretch at 9 to 68 (DPYLNTLRKEKVGVSIYLVNGIKLQGTIESFDQFVILLKNTVSQMVYKHAISTVVPVRPI) folds into the Sm domain.

This sequence belongs to the Hfq family. As to quaternary structure, homohexamer.

RNA chaperone that binds small regulatory RNA (sRNAs) and mRNAs to facilitate mRNA translational regulation in response to envelope stress, environmental stress and changes in metabolite concentrations. Also binds with high specificity to tRNAs. This chain is RNA-binding protein Hfq, found in Pseudomonas fluorescens (strain ATCC BAA-477 / NRRL B-23932 / Pf-5).